The chain runs to 151 residues: uncharacterized protein (151 aa).

The next 3 helical transmembrane spans lie at 14–34 (GAAL…YWLI), 45–65 (ISLV…GYLI), and 91–111 (VIVA…ASLI).

It is found in the cell membrane. This is an uncharacterized protein from Bacillus subtilis (strain 168).